Here is an 80-residue protein sequence, read N- to C-terminus: Reactive oxygen species modulator 1 (80 aa).

Residues 22 to 44 form a helical membrane-spanning segment; the sequence is MGFMMGFAVGMAAGAMFGTFSCL. Positions 42–60 are sufficient for antibacterial activity; it reads SCLRIGMRGRELMGGVGKT.

This sequence belongs to the MGR2 family.

The protein localises to the mitochondrion inner membrane. Its function is as follows. Has antibacterial activity against a variety of bacteria including S.aureus, P.aeruginosa and M.tuberculosis. Acts by inducing bacterial membrane breakage. Induces production of reactive oxygen species (ROS) which are necessary for cell proliferation. May play a role in inducing oxidative DNA damage and replicative senescence. May play a role in the coordination of mitochondrial morphology and cell proliferation. In Danio rerio (Zebrafish), this protein is Reactive oxygen species modulator 1 (romo1).